Consider the following 301-residue polypeptide: Probable deoxyhypusine synthase 1 (301 aa).

Lysine 269 acts as the Nucleophile in catalysis.

It belongs to the deoxyhypusine synthase family. Requires NAD(+) as cofactor.

The enzyme catalyses [eIF5A protein]-L-lysine + spermidine = [eIF5A protein]-deoxyhypusine + propane-1,3-diamine. The protein operates within protein modification; eIF5A hypusination. In terms of biological role, catalyzes the NAD-dependent oxidative cleavage of spermidine and the subsequent transfer of the butylamine moiety of spermidine to the epsilon-amino group of a specific lysine residue of the eIF-5A precursor protein to form the intermediate deoxyhypusine residue. The polypeptide is Probable deoxyhypusine synthase 1 (dys1) (Archaeoglobus fulgidus (strain ATCC 49558 / DSM 4304 / JCM 9628 / NBRC 100126 / VC-16)).